The chain runs to 271 residues: Intercellular adhesion molecule 4 (271 aa).

Positions 1 to 22 (MGSLFPLSLLFFLAAAYPGVGS) are cleaved as a signal peptide. Topologically, residues 23–240 (ALGRRTKRAQ…MLAWSPAPTA (218 aa)) are extracellular. 2 Ig-like C2-type domains span residues 62-124 (GKSV…TRWA) and 146-217 (GRKY…LNLD). 4 N-linked (GlcNAc...) asparagine glycosylation sites follow: asparagine 68, asparagine 78, asparagine 190, and asparagine 223. 4 disulfide bridges follow: cysteine 69-cysteine 113, cysteine 69-cysteine 117, cysteine 73-cysteine 117, and cysteine 153-cysteine 210. A helical transmembrane segment spans residues 241 to 261 (LASGSIAALVGILLTVGAAYL). Over 262–271 (CKCLAMKSQA) the chain is Cytoplasmic.

This sequence belongs to the immunoglobulin superfamily. ICAM family. Post-translationally, N- and O-glycosylated. Erythrocytes.

It is found in the cell membrane. Its subcellular location is the secreted. Functionally, ICAM proteins are ligands for the leukocyte adhesion protein LFA-1 (integrin alpha-L/beta-2). ICAM4 is also a ligand for alpha-4/beta-1 and alpha-V integrins. This is Intercellular adhesion molecule 4 (ICAM4) from Homo sapiens (Human).